We begin with the raw amino-acid sequence, 384 residues long: Cell division protein FtsZ (384 aa).

GTP-binding positions include 20–24, 107–109, E138, R142, and N186; these read GGGSN and GTG.

It belongs to the FtsZ family. As to quaternary structure, homodimer. Polymerizes to form a dynamic ring structure in a strictly GTP-dependent manner. Interacts directly with several other division proteins.

The protein localises to the cytoplasm. In terms of biological role, essential cell division protein that forms a contractile ring structure (Z ring) at the future cell division site. The regulation of the ring assembly controls the timing and the location of cell division. One of the functions of the FtsZ ring is to recruit other cell division proteins to the septum to produce a new cell wall between the dividing cells. Binds GTP and shows GTPase activity. This chain is Cell division protein FtsZ, found in Buchnera aphidicola subsp. Acyrthosiphon pisum (strain APS) (Acyrthosiphon pisum symbiotic bacterium).